The sequence spans 283 residues: Protein/nucleic acid deglycase HchA (283 aa).

3 residues coordinate Zn(2+): H86, E91, and H123. Residue C185 is the Nucleophile of the active site.

The protein belongs to the peptidase C56 family. HchA subfamily. As to quaternary structure, homodimer.

The protein resides in the cytoplasm. The enzyme catalyses N(omega)-(1-hydroxy-2-oxopropyl)-L-arginyl-[protein] + H2O = lactate + L-arginyl-[protein] + H(+). It carries out the reaction N(6)-(1-hydroxy-2-oxopropyl)-L-lysyl-[protein] + H2O = lactate + L-lysyl-[protein] + H(+). It catalyses the reaction S-(1-hydroxy-2-oxopropyl)-L-cysteinyl-[protein] + H2O = lactate + L-cysteinyl-[protein] + H(+). The catalysed reaction is N(omega)-(1-hydroxy-2-oxoethyl)-L-arginyl-[protein] + H2O = L-arginyl-[protein] + glycolate + H(+). The enzyme catalyses N(6)-(1-hydroxy-2-oxoethyl)-L-lysyl-[protein] + H2O = glycolate + L-lysyl-[protein] + H(+). It carries out the reaction S-(1-hydroxy-2-oxoethyl)-L-cysteinyl-[protein] + H2O = glycolate + L-cysteinyl-[protein] + H(+). It catalyses the reaction N(2)-(1-hydroxy-2-oxopropyl)-dGTP + H2O = lactate + dGTP + H(+). The catalysed reaction is N(2)-(1-hydroxy-2-oxopropyl)-GTP + H2O = lactate + GTP + H(+). The enzyme catalyses N(2)-(1-hydroxy-2-oxopropyl)-GDP + H2O = lactate + GDP + H(+). It carries out the reaction N(2)-(1-hydroxy-2-oxopropyl)-GMP + H2O = lactate + GMP + H(+). It catalyses the reaction N(2)-(1-hydroxy-2-oxoethyl)-dGTP + H2O = dGTP + glycolate + H(+). The catalysed reaction is N(2)-(1-hydroxy-2-oxoethyl)-GTP + H2O = glycolate + GTP + H(+). The enzyme catalyses N(2)-(1-hydroxy-2-oxoethyl)-GDP + H2O = glycolate + GDP + H(+). It carries out the reaction N(2)-(1-hydroxy-2-oxoethyl)-GMP + H2O = glycolate + GMP + H(+). It catalyses the reaction an N(2)-(1-hydroxy-2-oxopropyl)-guanosine in RNA + H2O = a guanosine in RNA + lactate + H(+). The catalysed reaction is an N(2)-(1-hydroxy-2-oxopropyl)-2'-deoxyguanosine in DNA + H2O = a 2'-deoxyguanosine in DNA + lactate + H(+). The enzyme catalyses an N(2)-(1-hydroxy-2-oxoethyl)-guanosine in RNA + H2O = a guanosine in RNA + glycolate + H(+). It carries out the reaction an N(2)-(1-hydroxy-2-oxoethyl)-2'-deoxyguanosine in DNA + H2O = a 2'-deoxyguanosine in DNA + glycolate + H(+). Its function is as follows. Protein and nucleotide deglycase that catalyzes the deglycation of the Maillard adducts formed between amino groups of proteins or nucleotides and reactive carbonyl groups of glyoxals. Thus, functions as a protein deglycase that repairs methylglyoxal- and glyoxal-glycated proteins, and releases repaired proteins and lactate or glycolate, respectively. Deglycates cysteine, arginine and lysine residues in proteins, and thus reactivates these proteins by reversing glycation by glyoxals. Acts on early glycation intermediates (hemithioacetals and aminocarbinols), preventing the formation of Schiff bases and advanced glycation endproducts (AGE). Also functions as a nucleotide deglycase able to repair glycated guanine in the free nucleotide pool (GTP, GDP, GMP, dGTP) and in DNA and RNA. Is thus involved in a major nucleotide repair system named guanine glycation repair (GG repair), dedicated to reversing methylglyoxal and glyoxal damage via nucleotide sanitization and direct nucleic acid repair. Plays an important role in protecting cells from carbonyl stress. The chain is Protein/nucleic acid deglycase HchA from Escherichia coli O45:K1 (strain S88 / ExPEC).